A 107-amino-acid polypeptide reads, in one-letter code: MTWTYILRQGDLPPGEMQRYEGGPEPVMVCNVDGEFFAVQDTCTHGDWALSDGYLDGDIVECTLHFGKFCVRTGKVKALPACKPIKVFPIKVEGDEVHVDLDNGELK.

One can recognise a Rieske domain in the interval 4–99 (TYILRQGDLP…IKVEGDEVHV (96 aa)). 4 residues coordinate [2Fe-2S] cluster: cysteine 43, histidine 45, cysteine 62, and histidine 65.

It belongs to the bacterial ring-hydroxylating dioxygenase ferredoxin component family. This dioxygenase system consists of four proteins: the two subunits of the hydroxylase component (todC1 and todC2), a ferredoxin (TodB) and a ferredoxin reductase (TodA).

It participates in xenobiotic degradation; toluene degradation. Its function is as follows. This protein seems to be a 2Fe-2S ferredoxin. The protein is Toluene 1,2-dioxygenase system ferredoxin subunit (todB) of Pseudomonas putida (strain ATCC 700007 / DSM 6899 / JCM 31910 / BCRC 17059 / LMG 24140 / F1).